A 252-amino-acid polypeptide reads, in one-letter code: Imidazole glycerol phosphate synthase subunit HisF (252 aa).

Catalysis depends on residues Asp11 and Asp130.

It belongs to the HisA/HisF family. As to quaternary structure, heterodimer of HisH and HisF.

The protein resides in the cytoplasm. The catalysed reaction is 5-[(5-phospho-1-deoxy-D-ribulos-1-ylimino)methylamino]-1-(5-phospho-beta-D-ribosyl)imidazole-4-carboxamide + L-glutamine = D-erythro-1-(imidazol-4-yl)glycerol 3-phosphate + 5-amino-1-(5-phospho-beta-D-ribosyl)imidazole-4-carboxamide + L-glutamate + H(+). It participates in amino-acid biosynthesis; L-histidine biosynthesis; L-histidine from 5-phospho-alpha-D-ribose 1-diphosphate: step 5/9. IGPS catalyzes the conversion of PRFAR and glutamine to IGP, AICAR and glutamate. The HisF subunit catalyzes the cyclization activity that produces IGP and AICAR from PRFAR using the ammonia provided by the HisH subunit. This is Imidazole glycerol phosphate synthase subunit HisF from Citrifermentans bemidjiense (strain ATCC BAA-1014 / DSM 16622 / JCM 12645 / Bem) (Geobacter bemidjiensis).